The sequence spans 405 residues: Dynactin subunit 2 (405 aa).

The segment at 1 to 24 (MADPKYADLPGIARNEPDVYETSD) is disordered. The stretch at 101-134 (PQQKYQRLLHEIQELTQEVEKAQSTVKESAAEEK) forms a coiled coil. The segment at 186 to 207 (AKTRKNPEGKSPAKGPGPDNEN) is disordered. Residues 383–403 (KENLATVEDNFTSIDARIKKL) are a coiled coil.

Belongs to the dynactin subunit 2 family. Subunit of dynactin, a multiprotein complex part of a tripartite complex with dynein and a adapter, such as BICDL1, BICD2 or HOOK3. The dynactin complex is built around ACTR1A/ACTB filament and consists of an actin-related filament composed of a shoulder domain, a pointed end and a barbed end. Its length is defined by its flexible shoulder domain. The soulder is composed of 2 DCTN1 subunits, 4 DCTN2 and 2 DCTN3.

It is found in the cytoplasm. The protein localises to the cytoskeleton. Its subcellular location is the microtubule organizing center. The protein resides in the centrosome. It localises to the membrane. In terms of biological role, part of the dynactin complex that activates the molecular motor dynein for ultra-processive transport along microtubules. In the dynactin soulder domain, binds the ACTR1A filament and acts as a molecular ruler to determine the length. Modulates cytoplasmic dynein binding to an organelle, and plays a role in prometaphase chromosome alignment and spindle organization during mitosis. Involved in anchoring microtubules to centrosomes. This chain is Dynactin subunit 2 (dctn2), found in Xenopus tropicalis (Western clawed frog).